Here is a 77-residue protein sequence, read N- to C-terminus: Acyl carrier protein (77 aa).

One can recognise a Carrier domain in the interval 2–77 (AEVFDRVKEI…DAVDYINSKA (76 aa)). At Ser-37 the chain carries O-(pantetheine 4'-phosphoryl)serine.

The protein belongs to the acyl carrier protein (ACP) family. Post-translationally, 4'-phosphopantetheine is transferred from CoA to a specific serine of apo-ACP by AcpS. This modification is essential for activity because fatty acids are bound in thioester linkage to the sulfhydryl of the prosthetic group.

The protein localises to the cytoplasm. Its pathway is lipid metabolism; fatty acid biosynthesis. Carrier of the growing fatty acid chain in fatty acid biosynthesis. In Oceanobacillus iheyensis (strain DSM 14371 / CIP 107618 / JCM 11309 / KCTC 3954 / HTE831), this protein is Acyl carrier protein.